We begin with the raw amino-acid sequence, 324 residues long: Probable pectinesterase A (324 aa).

The N-terminal stretch at 1-19 (MHGSLLKLALLSFSLASSA) is a signal peptide. Q142 provides a ligand contact to substrate. Catalysis depends on D165, which acts as the Proton donor. The active-site Nucleophile is the D186. R246 and W248 together coordinate substrate. A glycan (N-linked (GlcNAc...) asparagine) is linked at N285.

The protein belongs to the pectinesterase family.

The protein resides in the secreted. It carries out the reaction [(1-&gt;4)-alpha-D-galacturonosyl methyl ester](n) + n H2O = [(1-&gt;4)-alpha-D-galacturonosyl](n) + n methanol + n H(+). Its pathway is glycan metabolism; pectin degradation; 2-dehydro-3-deoxy-D-gluconate from pectin: step 1/5. Its function is as follows. Involved in maceration and soft-rotting of plant tissue. This chain is Probable pectinesterase A (pmeA), found in Aspergillus flavus (strain ATCC 200026 / FGSC A1120 / IAM 13836 / NRRL 3357 / JCM 12722 / SRRC 167).